Here is a 299-residue protein sequence, read N- to C-terminus: Small ribosomal subunit biogenesis GTPase RsgA (299 aa).

A CP-type G domain is found at 64–225 (KNEMIRPPVA…VGDTPGFSSL (162 aa)). GTP-binding positions include 113–116 (TKTD) and 168–176 (GQTGAGKST). Zn(2+) is bound by residues Cys249, Cys254, His256, and Cys262.

Belongs to the TRAFAC class YlqF/YawG GTPase family. RsgA subfamily. In terms of assembly, monomer. Associates with 30S ribosomal subunit, binds 16S rRNA. Zn(2+) serves as cofactor.

Its subcellular location is the cytoplasm. In terms of biological role, one of several proteins that assist in the late maturation steps of the functional core of the 30S ribosomal subunit. Helps release RbfA from mature subunits. May play a role in the assembly of ribosomal proteins into the subunit. Circularly permuted GTPase that catalyzes slow GTP hydrolysis, GTPase activity is stimulated by the 30S ribosomal subunit. The chain is Small ribosomal subunit biogenesis GTPase RsgA from Latilactobacillus sakei subsp. sakei (strain 23K) (Lactobacillus sakei subsp. sakei).